An 833-amino-acid chain; its full sequence is Leucine--tRNA ligase (833 aa).

The short motif at 41-52 (PYPSGVGLHVGH) is the 'HIGH' region element. The 'KMSKS' region motif lies at 610 to 614 (KMSKS). Lys613 contributes to the ATP binding site.

It belongs to the class-I aminoacyl-tRNA synthetase family.

It is found in the cytoplasm. The enzyme catalyses tRNA(Leu) + L-leucine + ATP = L-leucyl-tRNA(Leu) + AMP + diphosphate. The protein is Leucine--tRNA ligase of Streptococcus pneumoniae serotype 2 (strain D39 / NCTC 7466).